Consider the following 221-residue polypeptide: Protein DEHYDRATION-INDUCED 19 homolog 2 (221 aa).

2 disordered regions span residues 1–24 (MEDD…TAAK) and 162–193 (VLPD…SDSD).

It belongs to the Di19 family. Not phosphorylated in vitro by CPK3 or CPK11. As to expression, expressed in seedlings, roots, leaves, stems, flowers and siliques.

It localises to the cytoplasm. The protein localises to the nucleus. The protein is Protein DEHYDRATION-INDUCED 19 homolog 2 (DI19-2) of Arabidopsis thaliana (Mouse-ear cress).